The following is a 515-amino-acid chain: Zinc-binding protein AdcA (515 aa).

The signal sequence occupies residues 1-28 (MKKKILLMMSLISVFFAWQLTQAKQVLA). Residue histidine 66 coordinates Zn(2+). The interval 125-148 (DHHHEDADKKHEHNKHSEEGHNHA) is disordered. Residues 129–148 (EDADKKHEHNKHSEEGHNHA) form a his-rich loop region. Histidine 152, histidine 216, and glutamate 291 together coordinate Zn(2+).

Belongs to the bacterial solute-binding protein 9 family.

Its function is as follows. Part of the ATP-binding cassette (ABC) transport system AdcABC involved in zinc import. Binds zinc with high affinity and specificity and delivers it to the membrane permease for translocation into the cytoplasm. The protein is Zinc-binding protein AdcA (adcA) of Streptococcus pyogenes serotype M6 (strain ATCC BAA-946 / MGAS10394).